Consider the following 335-residue polypeptide: Glutamyl-tRNA reductase (335 aa).

Substrate is bound by residues 60–63, Ser-110, 115–117, and Gln-121; these read TCHR and ETE. The active-site Nucleophile is Cys-61. 189 to 194 lines the NADP(+) pocket; it reads GYSEIN.

Belongs to the glutamyl-tRNA reductase family. In terms of assembly, homodimer.

The catalysed reaction is (S)-4-amino-5-oxopentanoate + tRNA(Glu) + NADP(+) = L-glutamyl-tRNA(Glu) + NADPH + H(+). It participates in porphyrin-containing compound metabolism; protoporphyrin-IX biosynthesis; 5-aminolevulinate from L-glutamyl-tRNA(Glu): step 1/2. Catalyzes the NADPH-dependent reduction of glutamyl-tRNA(Glu) to glutamate 1-semialdehyde (GSA). This Chlamydia trachomatis serovar D (strain ATCC VR-885 / DSM 19411 / UW-3/Cx) protein is Glutamyl-tRNA reductase.